The chain runs to 624 residues: Glutamine--fructose-6-phosphate aminotransferase [isomerizing] (624 aa).

Cys-2 functions as the Nucleophile; for GATase activity in the catalytic mechanism. Residues 2–226 (CGIVGYVGQQ…QDQAVVLTAD (225 aa)) enclose the Glutamine amidotransferase type-2 domain. 2 consecutive SIS domains span residues 297–436 (SDQE…ARGT) and 469–614 (LAQR…VDKP). Lys-619 functions as the For Fru-6P isomerization activity in the catalytic mechanism.

As to quaternary structure, homodimer.

The protein resides in the cytoplasm. It carries out the reaction D-fructose 6-phosphate + L-glutamine = D-glucosamine 6-phosphate + L-glutamate. Its function is as follows. Catalyzes the first step in hexosamine metabolism, converting fructose-6P into glucosamine-6P using glutamine as a nitrogen source. This chain is Glutamine--fructose-6-phosphate aminotransferase [isomerizing], found in Mycolicibacterium paratuberculosis (strain ATCC BAA-968 / K-10) (Mycobacterium paratuberculosis).